The chain runs to 444 residues: 23S rRNA (uracil(1939)-C(5))-methyltransferase RlmD (444 aa).

One can recognise a TRAM domain in the interval 5–67 (RNRLDRTPFQ…RHFDEAKTVE (63 aa)). 4 residues coordinate [4Fe-4S] cluster: C80, C86, C89, and C168. Positions 276, 305, 310, 326, 353, and 374 each coordinate S-adenosyl-L-methionine. The Nucleophile role is filled by C400.

It belongs to the class I-like SAM-binding methyltransferase superfamily. RNA M5U methyltransferase family. RlmD subfamily.

It carries out the reaction uridine(1939) in 23S rRNA + S-adenosyl-L-methionine = 5-methyluridine(1939) in 23S rRNA + S-adenosyl-L-homocysteine + H(+). Functionally, catalyzes the formation of 5-methyl-uridine at position 1939 (m5U1939) in 23S rRNA. This chain is 23S rRNA (uracil(1939)-C(5))-methyltransferase RlmD, found in Xanthomonas euvesicatoria pv. vesicatoria (strain 85-10) (Xanthomonas campestris pv. vesicatoria).